Here is a 580-residue protein sequence, read N- to C-terminus: Arginine--tRNA ligase (580 aa).

A 'HIGH' region motif is present at residues 123–133 (PNLAKEMHVGH).

This sequence belongs to the class-I aminoacyl-tRNA synthetase family. In terms of assembly, monomer.

The protein resides in the cytoplasm. The catalysed reaction is tRNA(Arg) + L-arginine + ATP = L-arginyl-tRNA(Arg) + AMP + diphosphate. This chain is Arginine--tRNA ligase, found in Pseudoalteromonas translucida (strain TAC 125).